A 223-amino-acid chain; its full sequence is Deoxyribose-phosphate aldolase (223 aa).

D89 functions as the Proton donor/acceptor in the catalytic mechanism. K152 acts as the Schiff-base intermediate with acetaldehyde in catalysis. K181 acts as the Proton donor/acceptor in catalysis.

The protein belongs to the DeoC/FbaB aldolase family. DeoC type 1 subfamily.

The protein resides in the cytoplasm. It carries out the reaction 2-deoxy-D-ribose 5-phosphate = D-glyceraldehyde 3-phosphate + acetaldehyde. Its pathway is carbohydrate degradation; 2-deoxy-D-ribose 1-phosphate degradation; D-glyceraldehyde 3-phosphate and acetaldehyde from 2-deoxy-alpha-D-ribose 1-phosphate: step 2/2. In terms of biological role, catalyzes a reversible aldol reaction between acetaldehyde and D-glyceraldehyde 3-phosphate to generate 2-deoxy-D-ribose 5-phosphate. In Bacillus cereus (strain Q1), this protein is Deoxyribose-phosphate aldolase.